A 151-amino-acid polypeptide reads, in one-letter code: MLLYIILGLLILVGDQLLKGWIVANVSYGALHTVIPNILGLTYVQNDGAAWSMLAGQQWFFYIVTIIAVGVIGYLFYTSERSEKLYRIGLTLMLAGALGNFIDRLHLKYVVDMFQLEFINFPIFNVADTALTCGVICVFIAILLKEKVTHD.

A run of 3 helical transmembrane segments spans residues 3–23 (LYII…GWIV), 59–79 (WFFY…FYTS), and 85–107 (LYRI…RLHL). Catalysis depends on residues Asp-112 and Asp-128. A helical transmembrane segment spans residues 123–143 (IFNVADTALTCGVICVFIAIL).

It belongs to the peptidase A8 family.

The protein localises to the cell membrane. The enzyme catalyses Release of signal peptides from bacterial membrane prolipoproteins. Hydrolyzes -Xaa-Yaa-Zaa-|-(S,diacylglyceryl)Cys-, in which Xaa is hydrophobic (preferably Leu), and Yaa (Ala or Ser) and Zaa (Gly or Ala) have small, neutral side chains.. The protein operates within protein modification; lipoprotein biosynthesis (signal peptide cleavage). Its function is as follows. This protein specifically catalyzes the removal of signal peptides from prolipoproteins. The sequence is that of Lipoprotein signal peptidase from Latilactobacillus sakei subsp. sakei (strain 23K) (Lactobacillus sakei subsp. sakei).